The primary structure comprises 218 residues: Adenylate kinase (218 aa).

Residue 10-15 (GAGKGT) participates in ATP binding. Positions 30-59 (STGDIFREAIAKGTELGRKVQDIVNSGNLV) are NMP. Residues Thr31, Arg36, 57–59 (NLV), 85–88 (GYPR), and Gln92 each bind AMP. Positions 126–163 (TRRVCSKCGKVYNVITLPSKVEGICDDCGGTLIQRDDD) are LID. Arg127 provides a ligand contact to ATP. The Zn(2+) site is built by Cys130 and Cys133. 136–137 (VY) is an ATP binding site. Zn(2+) contacts are provided by Cys150 and Cys153. Positions 160 and 171 each coordinate AMP. Residue Lys199 participates in ATP binding.

This sequence belongs to the adenylate kinase family. As to quaternary structure, monomer.

The protein localises to the cytoplasm. The enzyme catalyses AMP + ATP = 2 ADP. The protein operates within purine metabolism; AMP biosynthesis via salvage pathway; AMP from ADP: step 1/1. Its function is as follows. Catalyzes the reversible transfer of the terminal phosphate group between ATP and AMP. Plays an important role in cellular energy homeostasis and in adenine nucleotide metabolism. The sequence is that of Adenylate kinase from Fervidobacterium nodosum (strain ATCC 35602 / DSM 5306 / Rt17-B1).